The sequence spans 713 residues: MSLSPSDRELVTEELGREPTPAEEALFENLWSEHCAYRSSQPLLSAFESEGDRVVVGPGDDAAVVALPDPETGENSDTYITMGIESHNHPSYVDPFDGAATGVGGIVRDTMSMGAYPIALADSLYFGDFDREHSKYLFEGVVEGISHYGNCIGVPTVTGSVAFHDDYEGNPLVNVACVGLTDDERLVTAEAQTPGNKLVLFGNATGRDGLGGASFASEDLDEDAETEDRPAVQVGDPYAEKRLIEANEELVDDSLVRAARDLGAAGLGGASSELVAKGGLGAHIELDRVHQREPNMNALEILLAESQERMCYEVRPEDVDAVAAVADKYDLGCSVIGDVTDGNYVCTFDGETVVDCDAEYLADGAPMNDLDHVEPTQPDRDRPSPDLETAFEAVVAAPNTASKEWVYRQYDHEVGTRTALKPGDDAALMAVREAGVGLAFSSGADPNWTDTAPYDGARAVALENATNIAAKGALPLAAVDCLNGGNPEKPDVYGGFRGIVNGLADMCSTLDVPVVGGNVSLYNDSPSGPIPPTPTLAMTGTKPGYDAPPAALSGDGDLLVVGDGGDLELGGSELLAQFGGSDQFPALPDSPAAFIEAVADIADLDSTHATHDVSHGGLAVALAELVGDAGADVDLAGSPDALSVLFSEAVGRVVVETTDPEAVKERLDGVAPVEHIGHATDSGRLELSVGDETLSYSAADIASLRSVIGETLE.

A compositionally biased stretch (basic and acidic residues) spans 1 to 17 (MSLSPSDRELVTEELGR). The disordered stretch occupies residues 1–20 (MSLSPSDRELVTEELGREPT). His-34 is an active-site residue. Tyr-37 is a binding site for ATP. Glu-85 serves as a coordination point for Mg(2+). Residues 86 to 89 (SHNH) and Arg-108 each bind substrate. The active-site Proton acceptor is the His-87. Mg(2+) is bound at residue Asp-109. Gln-233 is a binding site for substrate. Asp-261 is a Mg(2+) binding site. Position 305–307 (305–307 (ESQ)) interacts with substrate. Asp-480 and Gly-517 together coordinate ATP. Position 518 (Asn-518) interacts with Mg(2+). Ser-520 contacts substrate.

The protein belongs to the FGAMS family. As to quaternary structure, monomer. Part of the FGAM synthase complex composed of 1 PurL, 1 PurQ and 2 PurS subunits.

It is found in the cytoplasm. The catalysed reaction is N(2)-formyl-N(1)-(5-phospho-beta-D-ribosyl)glycinamide + L-glutamine + ATP + H2O = 2-formamido-N(1)-(5-O-phospho-beta-D-ribosyl)acetamidine + L-glutamate + ADP + phosphate + H(+). The protein operates within purine metabolism; IMP biosynthesis via de novo pathway; 5-amino-1-(5-phospho-D-ribosyl)imidazole from N(2)-formyl-N(1)-(5-phospho-D-ribosyl)glycinamide: step 1/2. Functionally, part of the phosphoribosylformylglycinamidine synthase complex involved in the purines biosynthetic pathway. Catalyzes the ATP-dependent conversion of formylglycinamide ribonucleotide (FGAR) and glutamine to yield formylglycinamidine ribonucleotide (FGAM) and glutamate. The FGAM synthase complex is composed of three subunits. PurQ produces an ammonia molecule by converting glutamine to glutamate. PurL transfers the ammonia molecule to FGAR to form FGAM in an ATP-dependent manner. PurS interacts with PurQ and PurL and is thought to assist in the transfer of the ammonia molecule from PurQ to PurL. In Natronomonas pharaonis (strain ATCC 35678 / DSM 2160 / CIP 103997 / JCM 8858 / NBRC 14720 / NCIMB 2260 / Gabara) (Halobacterium pharaonis), this protein is Phosphoribosylformylglycinamidine synthase subunit PurL.